The following is a 160-amino-acid chain: Small ribosomal subunit protein uS17z (160 aa).

It belongs to the universal ribosomal protein uS17 family.

The protein resides in the cytoplasm. In Arabidopsis thaliana (Mouse-ear cress), this protein is Small ribosomal subunit protein uS17z (RPS11A).